The sequence spans 90 residues: Large ribosomal subunit protein bL27 (90 aa).

A disordered region spans residues 1–20 (MAHKKAGGSSRNGRDSAGKR).

This sequence belongs to the bacterial ribosomal protein bL27 family.

This is Large ribosomal subunit protein bL27 from Nitrobacter hamburgensis (strain DSM 10229 / NCIMB 13809 / X14).